The chain runs to 840 residues: MWSGIPIFALLSSIGIAAAETGLDGWLRYASVPCNGNCQRALPSHIVTLNSTRSSPVYVAGQELQDGLHQILGKHASVKSTGCSTDSSIIVGTVEAYRQVCNAGRQVPQFDVDGFWLSIREKSVLIVGQSERGALYGAYEYLSMLAQGNFSQVSYATSPHAPIRWVNQWDNMDGSIERGYGGPSIFFKDGVIRQDLSRVQQYARLLASVRINGIIVNNVNANASLLMPSNMDGLARIADIFRPYGIRVGISLNFASPSTLGNLSTYDPFDSSVIAWWGNVTDQLYARIPDMAGYLVKANSEGQPGPTTYNRTLADGANMFARALKPYGGVVMFRAFVYDHHISEDNWYNDRANAAVDFFKPLDGKFDDNVVVQIKYGPIDFQVREPASPLFANLYKTNTAIELQVTQEYLGQQSHLVYLPPLWQTILGFDLRVDQKPSLVRDIISGQRFDRPLGGWAAVVNVGTNSTWLGSHLAMSNLYAYGRLAWEPTLDSEDIVQDWIRLTFGLDRRIVDTLTQMSMESWPAYENYSGNLGIQTLTDILYTHYGPNPASQDGNGWGQWTRADHLSIGMDRTVKNGTKFSGQYPAEVAAMYENIETTPDNLLLWFHHVNYTQRLHSGKTVIQHFYDAHYTGAETAQTFVSQWESLRERIDAERYQHVLTRLIYQAGHSIVWRDAINNFYHNLSGIADEKQRVGHHPWRVEAEDMQLDGYVPYAVSPFETASNYTAIVTASNGTTGTASATLDFKTGTYDLGINYYDMYGGKSHWTVYLNDRVVGQWQGNSEDVLSHTPSIYLDGHSATRITFRDVKIHKGDRLKIVGKPDGVEPAPLDYVVVLPPGIVD.

A signal peptide spans 1–19 (MWSGIPIFALLSSIGIAAA). N-linked (GlcNAc...) asparagine glycosylation is found at asparagine 50, asparagine 149, asparagine 222, asparagine 262, asparagine 279, asparagine 310, asparagine 465, asparagine 527, asparagine 576, asparagine 610, asparagine 682, asparagine 723, and asparagine 732.

Belongs to the glycosyl hydrolase 67 family.

The protein localises to the secreted. It carries out the reaction an alpha-D-glucuronoside + H2O = D-glucuronate + an alcohol. Its function is as follows. Alpha-glucuronidase involved in the hydrolysis of xylan, a major structural heterogeneous polysaccharide found in plant biomass representing the second most abundant polysaccharide in the biosphere, after cellulose. Releases 4-O-methylglucuronic acid from xylan. The protein is Probable alpha-glucuronidase A (aguA) of Aspergillus fumigatus (strain ATCC MYA-4609 / CBS 101355 / FGSC A1100 / Af293) (Neosartorya fumigata).